The chain runs to 146 residues: uncharacterized protein (146 aa).

4 helical membrane passes run 1-21 (MFAN…AASL), 35-55 (AAVY…LFVG), 87-107 (GGAG…GVGH), and 111-131 (AIAA…GGHL).

It localises to the cell membrane. This is an uncharacterized protein from Mycobacterium tuberculosis (strain CDC 1551 / Oshkosh).